The chain runs to 240 residues: (DL)-glycerol-3-phosphatase 2 (240 aa).

The Nucleophile role is filled by D20. Residues D20, D22, and D185 each coordinate Mg(2+). D22 functions as the Proton donor in the catalytic mechanism.

This sequence belongs to the HAD-like hydrolase superfamily. DOG/GPP family. It depends on Mg(2+) as a cofactor. Ubiquitous with highest expression in siliques. Mainly restricted to the meristem of immature flower and vascular elements of the root, shoot, leave, siliqua and developing embryo (at the protein level).

It is found in the cytoplasm. The catalysed reaction is sn-glycerol 1-phosphate + H2O = glycerol + phosphate. The enzyme catalyses sn-glycerol 3-phosphate + H2O = glycerol + phosphate. In terms of biological role, acts as a glycerol-3-phosphatase with higher stereospecificity for L-glycerol-3-phosphate than DL-glycerol-3-phosphate. In Arabidopsis thaliana (Mouse-ear cress), this protein is (DL)-glycerol-3-phosphatase 2 (GPP2).